Here is a 428-residue protein sequence, read N- to C-terminus: Adenylosuccinate synthetase (428 aa).

GTP is bound by residues 12 to 18 and 40 to 42; these read GDEGKGK and GHT. D13 (proton acceptor) is an active-site residue. 2 residues coordinate Mg(2+): D13 and G40. IMP-binding positions include 13-16, 38-41, T128, R142, Q223, T238, and R302; these read DEGK and NAGH. H41 functions as the Proton donor in the catalytic mechanism. Residue 298–304 coordinates substrate; that stretch reads TTTGRPR. Residues R304, 330-332, and 412-414 contribute to the GTP site; these read KLD and GVG.

This sequence belongs to the adenylosuccinate synthetase family. In terms of assembly, homodimer. The cofactor is Mg(2+).

It localises to the cytoplasm. The catalysed reaction is IMP + L-aspartate + GTP = N(6)-(1,2-dicarboxyethyl)-AMP + GDP + phosphate + 2 H(+). The protein operates within purine metabolism; AMP biosynthesis via de novo pathway; AMP from IMP: step 1/2. In terms of biological role, plays an important role in the de novo pathway of purine nucleotide biosynthesis. Catalyzes the first committed step in the biosynthesis of AMP from IMP. The polypeptide is Adenylosuccinate synthetase (Kineococcus radiotolerans (strain ATCC BAA-149 / DSM 14245 / SRS30216)).